The chain runs to 477 residues: Succinate-semialdehyde dehydrogenase [NADP(+)] (477 aa).

NADP(+) contacts are provided by residues 142-143, 166-169, and 218-219; these read WN, KHSE, and GS. E240 serves as the catalytic Proton acceptor. L241 provides a ligand contact to NADP(+). C274 (nucleophile) is an active-site residue. Residue E371 participates in NADP(+) binding.

The protein belongs to the aldehyde dehydrogenase family.

The enzyme catalyses succinate semialdehyde + NADP(+) + H2O = succinate + NADPH + 2 H(+). Its pathway is amino-acid degradation; 4-aminobutanoate degradation. Its function is as follows. Catalyzes the NADP(+) dependent oxidation of succinate semialdehyde to succinate. In Deinococcus radiodurans (strain ATCC 13939 / DSM 20539 / JCM 16871 / CCUG 27074 / LMG 4051 / NBRC 15346 / NCIMB 9279 / VKM B-1422 / R1), this protein is Succinate-semialdehyde dehydrogenase [NADP(+)] (ssdA).